Here is a 1023-residue protein sequence, read N- to C-terminus: MANSQLDRVKGLIDSLNQHTKSAAKSGAGALKNGLGQVKQAGQKLILYIPKDYQASTGSSLNDLVKAAEALGIEVHRSEKNGTALAKELFGTTEKLLGFSERGIALFAPQFDKLLNKNQKLSKSLGGSSEALGQRLNKTQTALSALQSFLGTAIAGMDLDSLLRRRRNGEDVSGSELAKAGVDLAAQLVDNIASATGTVDAFAEQLGKLAMPYLTLALSGLASKLNNLPDLSLAGPGFDAVSGILSVVSASFILSNKDADAGTKAAAGIEISTKILGNIGKAVSQYIIAQRVAAGLSTTAATGGLIGSVVALAISPLSFLNVADKFERAKQLEQYSERFKKFGYEGDSLLASFYRETGAIEAALTTINSVLSAASAGVGAAATGSLVGAPVAALVSAITGIISGILDASKQAIFERVATKLANKIDEWEKKHGKNYFENGYDARHSAFLEDTFELLSQYNKEYSVERVVAITQQRWDVNIGELAGITRKGADAKSGKAYVDFFEEGKLLEKDPDRFDKKVFDPLEGKIDLSSINKTTLLKFITPVFTAGEEIRERKQTGKYEYMTELFVKGKEKWVVTGVESHNAIYDYTNLIQLAIDKKGEKRQVTIESHLGEKNDRIYLSSGSSIVYAGNGHDVAYYDKTDTGYLTFDGQSAQKAGEYIVTKELKADVKVLKEVVKTQDISVGKTCSEKLEYRDYELSPFELGNGIRAKDELHSVEEIIGSNRKDKFFGSRFTDIFHGAKGDDEIYGNDGHDILYGDDGNDVIHGGDGNDHLVGGNGNDRLIGGKGNNFLNGGDGDDELQVFEGQYNVLLGGAGNDILYGSDGTNLFDGGVGNDKIYGGLGKDIYRYSKEYGRHIIIEKGGDDDTLLLSDLSFKDVGFIRIGDDLLVNKRIGGTLYYHEDYNGNALTIKDWFKEGKEGQNNKIEKIVDKDGAYVLSQYLTELTAPGRGINYFNGLEEKLYYGEGYNALPQLRKDIEQIISSTGALTGEHGQVLVGAGGPLAYSNSPNSIPNAFSNYLTQSA.

The next 3 membrane-spanning stretches (helical) occupy residues 226–256 (NNLPDLSLAGPGFDAVSGILSVVSASFILSN), 297–326 (STTAATGGLIGSVVALAISPLSFLNVADKF), and 367–406 (INSVLSAASAGVGAAATGSLVGAPVAALVSAITGIISGIL). Hemolysin-type calcium-binding repeat units lie at residues 730 to 747 (FGSRFTDIFHGAKGDDEI), 748 to 765 (YGNDGHDILYGDDGNDVI), 766 to 783 (HGGDGNDHLVGGNGNDRL), 784 to 801 (IGGKGNNFLNGGDGDDEL), 812 to 829 (LGGAGNDILYGSDGTNLF), and 830 to 847 (DGGVGNDKIYGGLGKDIY).

Belongs to the RTX prokaryotic toxin (TC 1.C.11) family. Palmitoylated by ApxIC. The toxin only becomes active when modified.

The protein localises to the secreted. It is found in the host cell membrane. In terms of biological role, one of the virulence factors of A.pleuropneumoniae, which has a strong hemolytic activity and is cytotoxic for alveolar macrophages and neutrophils. The sequence is that of RTX-I toxin determinant A from serotypes 5/10 (apxIA) from Actinobacillus pleuropneumoniae (Haemophilus pleuropneumoniae).